Reading from the N-terminus, the 119-residue chain is Large ribosomal subunit protein eL31z (119 aa).

Belongs to the eukaryotic ribosomal protein eL31 family.

In Arabidopsis thaliana (Mouse-ear cress), this protein is Large ribosomal subunit protein eL31z (RPL31A).